The sequence spans 491 residues: Anhydromuropeptide permease (491 aa).

The Cytoplasmic portion of the chain corresponds to 1–11 (MSSQYLRIFQQ). The chain crosses the membrane as a helical span at residues 12–32 (PRSAILLILGFASGLPLALTS). Topologically, residues 33–47 (GTLQAWMTVENIDLK) are periplasmic. A helical transmembrane segment spans residues 48–61 (TIGFFSLVGQAYVF). Over 62–81 (KFLWSPLMDRYTPPFFGRRR) the chain is Cytoplasmic. Residues 82–105 (GWLLATQILLLVAIAAMGFLEPGT) traverse the membrane as a helical segment. Q106 is a topological domain (periplasmic). The helical transmembrane segment at 107–124 (LRWMAALAVVIAFCSASQ) threads the bilayer. The Cytoplasmic segment spans residues 125-221 (DIVFDAWKTD…VAPLRDFFGR (97 aa)). The helical transmembrane segment at 222–240 (NNAWLILLLIVLYKLGDAF) threads the bilayer. At 241 to 264 (AMSLTTTFLIRGVGFDAGEVGVVN) the chain is on the periplasmic side. Residues 265 to 284 (KTLGLLATIVGALYGGILMQ) form a helical membrane-spanning segment. Over 285–287 (RLS) the chain is Cytoplasmic. A helical transmembrane segment spans residues 288–303 (LFRALLIFGILQGASN). Residues 304–327 (AGYWLLSITDKHLYSMGAAVFFEN) are Periplasmic-facing. The helical transmembrane segment at 328-346 (LCGGMGTSAFVALLMTLCN) threads the bilayer. Over 347–421 (KSFSATQFAL…NDNFISRTAY (75 aa)) the chain is Cytoplasmic. Residues 422–453 (PAGYAFAMWTLAAGVSLLAVWLLLLTMDALDL) form a helical membrane-spanning segment. Residues 454–457 (THFS) are Periplasmic-facing. A helical transmembrane segment spans residues 458 to 485 (FLPALLEVGVLVALSGVVLGGLLDYLAL). At 486 to 491 (RKTHLT) the chain is on the cytoplasmic side.

This sequence belongs to the major facilitator superfamily.

It localises to the cell inner membrane. Its function is as follows. Permease involved in cell wall peptidoglycan recycling. Transports, from the periplasm into the cytoplasm, the disaccharide N-acetylglucosaminyl-beta-1,4-anhydro-N-acetylmuramic acid (GlcNAc-anhMurNAc) and GlcNAc-anhMurNAc-peptides. Transport is dependent on the proton motive force. The polypeptide is Anhydromuropeptide permease (ampG) (Escherichia coli O157:H7).